Consider the following 764-residue polypeptide: 5-methyltetrahydropteroyltriglutamate--homocysteine methyltransferase (764 aa).

Residues 16 to 19 (RELK) and K117 each bind 5-methyltetrahydropteroyltri-L-glutamate. L-homocysteine-binding positions include 442–444 (IGS) and E495. L-methionine-binding positions include 442–444 (IGS) and E495. 5-methyltetrahydropteroyltri-L-glutamate contacts are provided by residues 526-527 (RC) and W572. D610 is an L-homocysteine binding site. D610 is an L-methionine binding site. 5-methyltetrahydropteroyltri-L-glutamate is bound at residue E616. Zn(2+) contacts are provided by H652, C654, and E676. Residue H705 is the Proton donor of the active site. C737 contacts Zn(2+).

Belongs to the vitamin-B12 independent methionine synthase family. Zn(2+) is required as a cofactor.

It catalyses the reaction 5-methyltetrahydropteroyltri-L-glutamate + L-homocysteine = tetrahydropteroyltri-L-glutamate + L-methionine. The protein operates within amino-acid biosynthesis; L-methionine biosynthesis via de novo pathway; L-methionine from L-homocysteine (MetE route): step 1/1. Its function is as follows. Catalyzes the transfer of a methyl group from 5-methyltetrahydrofolate to homocysteine resulting in methionine formation. The polypeptide is 5-methyltetrahydropteroyltriglutamate--homocysteine methyltransferase (Bordetella petrii (strain ATCC BAA-461 / DSM 12804 / CCUG 43448)).